A 130-amino-acid chain; its full sequence is MVKQIRKLTIKKAKWKASDGIVYIYATLNNTIITIVDTSGRVVSWSSAGICGFRGARKASPFAAKTAAEYAARQCINKGINRAQVLVKGLGTGRHTSIRGLQDAGLKISLIRDITTTPHNGCRQPKRRRV.

The protein belongs to the universal ribosomal protein uS11 family. In terms of assembly, part of the 30S ribosomal subunit.

It is found in the plastid. The protein localises to the chloroplast. This is Small ribosomal subunit protein uS11c from Bigelowiella natans (Pedinomonas minutissima).